The following is a 688-amino-acid chain: G protein-coupled receptor kinase 3 (688 aa).

The N-terminal stretch occupies residues 1–190 (MADLEAVLAD…ELNIHLTMND (190 aa)). The RGS domain maps to 54-175 (TFDKIFNQRI…MESDKFTRFC (122 aa)). One can recognise a Protein kinase domain in the interval 191–453 (FSVHRIIGRG…AQELKTHDFF (263 aa)). ATP is bound by residues 197 to 205 (IGRGGFGEV) and lysine 220. Aspartate 317 acts as the Proton acceptor in catalysis. Residues 454–521 (RGIDWQHVYL…VISERWQQEV (68 aa)) enclose the AGC-kinase C-terminal domain. A PH domain is found at 558–652 (DCIVHGYMLK…WKKELTETFM (95 aa)).

The protein belongs to the protein kinase superfamily. AGC Ser/Thr protein kinase family. GPRK subfamily. Interacts with GIT1. Post-translationally, ubiquitinated. In terms of tissue distribution, ubiquitous; brain, spleen &gt; heart, lung &gt; kidney.

It localises to the postsynapse. Its subcellular location is the presynapse. The catalysed reaction is [beta-adrenergic receptor] + ATP = [beta-adrenergic receptor]-phosphate + ADP + H(+). Its function is as follows. Specifically phosphorylates the agonist-occupied form of the beta-adrenergic and closely related receptors. This is G protein-coupled receptor kinase 3 from Bos taurus (Bovine).